Consider the following 285-residue polypeptide: MLLNKDRFGKLTSKSLDSIAALGLREANAELPCLFRNNSIESSSKTPPEPLSPLAFELSTNLKKSASALAWNVQYFVDTYGLSNVGFLTLTFRDHVTDPKEAQRRFNSLKTNILAKRYRAYIRVMEPMKSGRIHYHLLVALHSDIRTGFDFPAVYRQDYSSANKAIRSEWSFWRKTAPKYGFGRTELMPVRSNSEGIGRYVGKYISKGIESRTEQFKGVRLVEYSRKAKSLLRASSSFLTGLMSGVANFRYSFITSRTIWAVNQLLTAYAVFSALVGRITGVILL.

Its function is as follows. Essential for autonomous replication of the phasyl DNA replicon. The protein is Phasyl DNA replicon protein arp (arp) of Escherichia coli.